A 437-amino-acid chain; its full sequence is Phosphomethylpyrimidine synthase (437 aa).

Residues N69, M98, Y127, H163, 185 to 187 (SRG), 226 to 229 (DACR), and E265 each bind substrate. H269 contacts Zn(2+). Residue Y292 participates in substrate binding. A Zn(2+)-binding site is contributed by H333. 3 residues coordinate [4Fe-4S] cluster: C409, C412, and C416.

The protein belongs to the ThiC family. It depends on [4Fe-4S] cluster as a cofactor.

It catalyses the reaction 5-amino-1-(5-phospho-beta-D-ribosyl)imidazole + S-adenosyl-L-methionine = 4-amino-2-methyl-5-(phosphooxymethyl)pyrimidine + CO + 5'-deoxyadenosine + formate + L-methionine + 3 H(+). It participates in cofactor biosynthesis; thiamine diphosphate biosynthesis. Its function is as follows. Catalyzes the synthesis of the hydroxymethylpyrimidine phosphate (HMP-P) moiety of thiamine from aminoimidazole ribotide (AIR) in a radical S-adenosyl-L-methionine (SAM)-dependent reaction. This chain is Phosphomethylpyrimidine synthase, found in Clostridium botulinum (strain Kyoto / Type A2).